Consider the following 375-residue polypeptide: 23S rRNA (uracil(747)-C(5))-methyltransferase RlmC (375 aa).

Residues cysteine 3, cysteine 11, cysteine 14, and cysteine 87 each contribute to the [4Fe-4S] cluster site. S-adenosyl-L-methionine-binding residues include glutamine 212, phenylalanine 241, glutamate 262, and asparagine 307. Cysteine 334 acts as the Nucleophile in catalysis.

Belongs to the class I-like SAM-binding methyltransferase superfamily. RNA M5U methyltransferase family. RlmC subfamily.

It carries out the reaction uridine(747) in 23S rRNA + S-adenosyl-L-methionine = 5-methyluridine(747) in 23S rRNA + S-adenosyl-L-homocysteine + H(+). In terms of biological role, catalyzes the formation of 5-methyl-uridine at position 747 (m5U747) in 23S rRNA. The polypeptide is 23S rRNA (uracil(747)-C(5))-methyltransferase RlmC (Escherichia coli O6:H1 (strain CFT073 / ATCC 700928 / UPEC)).